The following is a 529-amino-acid chain: BTB/POZ domain-containing protein 6 (529 aa).

The region spanning 127-197 (ADVHFIVGPA…LYSDEIDLEA (71 aa)) is the BTB domain.

In terms of assembly, homodimer and heterodimer. Interacts with cul3 via the BTB domain.

It localises to the cytoplasm. Its function is as follows. Adapter protein for the cul3 E3 ubiquitin-protein ligase complex. Involved in late neuronal development and muscle formation. This is BTB/POZ domain-containing protein 6 (btbd6) from Xenopus laevis (African clawed frog).